Reading from the N-terminus, the 430-residue chain is Tyrosine--tRNA ligase (430 aa).

Position 32 (tyrosine 32) interacts with L-tyrosine. A 'HIGH' region motif is present at residues 37-46 (PTADSLHIGH). Residues tyrosine 172 and glutamine 176 each contribute to the L-tyrosine site. The 'KMSKS' region signature appears at 232-236 (KFGKT). Lysine 235 contacts ATP. One can recognise an S4 RNA-binding domain in the interval 362-430 (ISLVDLLADA…KKSYYLIIVE (69 aa)).

It belongs to the class-I aminoacyl-tRNA synthetase family. TyrS type 1 subfamily. As to quaternary structure, homodimer.

The protein resides in the cytoplasm. It carries out the reaction tRNA(Tyr) + L-tyrosine + ATP = L-tyrosyl-tRNA(Tyr) + AMP + diphosphate + H(+). Its function is as follows. Catalyzes the attachment of tyrosine to tRNA(Tyr) in a two-step reaction: tyrosine is first activated by ATP to form Tyr-AMP and then transferred to the acceptor end of tRNA(Tyr). The protein is Tyrosine--tRNA ligase of Porphyromonas gingivalis (strain ATCC BAA-308 / W83).